The following is a 78-amino-acid chain: RNA-binding protein Hfq (78 aa).

Residues 9–69 form the Sm domain; the sequence is DHFLNQLRKE…ISTFAPQRNV (61 aa).

The protein belongs to the Hfq family. As to quaternary structure, homohexamer.

Functionally, RNA chaperone that binds small regulatory RNA (sRNAs) and mRNAs to facilitate mRNA translational regulation in response to envelope stress, environmental stress and changes in metabolite concentrations. Also binds with high specificity to tRNAs. This chain is RNA-binding protein Hfq, found in Halalkalibacterium halodurans (strain ATCC BAA-125 / DSM 18197 / FERM 7344 / JCM 9153 / C-125) (Bacillus halodurans).